The sequence spans 624 residues: Kelch-like protein diablo (624 aa).

The disordered stretch occupies residues 1 to 55 (MGDPLLPGSTGLGSGSATAATGGSVTAGSGLGNGGTGGAERPPSPARLTHTSEKH). Low complexity predominate over residues 15 to 28 (GSATAATGGSVTAG). Gly residues predominate over residues 29 to 38 (SGLGNGGTGG). Residues 73–140 (CDVVLNVGGR…CYTAHIIVEE (68 aa)) enclose the BTB domain. Residues 175 to 277 (CLGIRAFADT…SPKFLVGTVG (103 aa)) form the BACK domain. 6 Kelch repeats span residues 324–370 (VLFA…VLND), 372–418 (LYAV…VLDG), 419–465 (FLYA…VLSG), 467–512 (LYAI…VFNN), 514–559 (IYAV…VVNG), and 560–606 (QLYA…VMRA).

It participates in protein modification; protein ubiquitination. In terms of biological role, probable substrate-specific adapter of an E3 ubiquitin-protein ligase complex which mediates the ubiquitination and subsequent proteasomal degradation of target proteins. May have a role in synapse differentiation and growth. The polypeptide is Kelch-like protein diablo (Drosophila grimshawi (Hawaiian fruit fly)).